Consider the following 263-residue polypeptide: 5'-nucleotidase SurE (263 aa).

Aspartate 15, aspartate 16, serine 46, and asparagine 102 together coordinate a divalent metal cation.

The protein belongs to the SurE nucleotidase family. A divalent metal cation is required as a cofactor.

The protein localises to the cytoplasm. It carries out the reaction a ribonucleoside 5'-phosphate + H2O = a ribonucleoside + phosphate. In terms of biological role, nucleotidase that shows phosphatase activity on nucleoside 5'-monophosphates. This chain is 5'-nucleotidase SurE, found in Chlorobaculum tepidum (strain ATCC 49652 / DSM 12025 / NBRC 103806 / TLS) (Chlorobium tepidum).